A 296-amino-acid chain; its full sequence is Cytidine deaminase (296 aa).

CMP/dCMP-type deaminase domains lie at 52–172 (TAVE…FGPK) and 191–296 (THAD…YFAL). Residue 93-95 (NQE) participates in substrate binding. Residue histidine 106 coordinates Zn(2+). The active-site Proton donor is the glutamate 108. Zn(2+)-binding residues include cysteine 133 and cysteine 136.

The protein belongs to the cytidine and deoxycytidylate deaminase family. In terms of assembly, homodimer. Zn(2+) serves as cofactor.

The enzyme catalyses cytidine + H2O + H(+) = uridine + NH4(+). It carries out the reaction 2'-deoxycytidine + H2O + H(+) = 2'-deoxyuridine + NH4(+). Functionally, this enzyme scavenges exogenous and endogenous cytidine and 2'-deoxycytidine for UMP synthesis. In Actinobacillus succinogenes (strain ATCC 55618 / DSM 22257 / CCUG 43843 / 130Z), this protein is Cytidine deaminase.